We begin with the raw amino-acid sequence, 86 residues long: U15-lycotoxin-Ls1d (86 aa).

The signal sequence occupies residues 1 to 20 (MNSKIFAVLFLLAFLSCVLS). The WAP domain maps to 21 to 66 (DQYCPKSSITACKKMNIRNDCCKDDDCTGGSWCCATPCGNFCKYPT). Disulfide bonds link cysteine 24/cysteine 54, cysteine 32/cysteine 58, cysteine 41/cysteine 53, cysteine 42/cysteine 80, and cysteine 47/cysteine 62.

Belongs to the venom protein 11 family. 01 (wap-1) subfamily. In terms of processing, contains 5 disulfide bonds. As to expression, expressed by the venom gland.

It is found in the secreted. Functionally, has antibacterial activity. This chain is U15-lycotoxin-Ls1d, found in Lycosa singoriensis (Wolf spider).